A 204-amino-acid chain; its full sequence is Urease accessory protein UreG (204 aa).

15–22 (GPVGSGKT) lines the GTP pocket.

It belongs to the SIMIBI class G3E GTPase family. UreG subfamily. As to quaternary structure, homodimer. UreD, UreF and UreG form a complex that acts as a GTP-hydrolysis-dependent molecular chaperone, activating the urease apoprotein by helping to assemble the nickel containing metallocenter of UreC. The UreE protein probably delivers the nickel.

It is found in the cytoplasm. Facilitates the functional incorporation of the urease nickel metallocenter. This process requires GTP hydrolysis, probably effectuated by UreG. The polypeptide is Urease accessory protein UreG (Methylobacterium nodulans (strain LMG 21967 / CNCM I-2342 / ORS 2060)).